The following is a 356-amino-acid chain: DNA polymerase IV (356 aa).

In terms of domain architecture, UmuC spans 6–187 (IIHIDMDYFF…LDIGDFPGVG (182 aa)). 2 residues coordinate Mg(2+): Asp-10 and Asp-105. The active site involves Glu-106.

It belongs to the DNA polymerase type-Y family. As to quaternary structure, monomer. It depends on Mg(2+) as a cofactor.

It localises to the cytoplasm. It catalyses the reaction DNA(n) + a 2'-deoxyribonucleoside 5'-triphosphate = DNA(n+1) + diphosphate. Functionally, poorly processive, error-prone DNA polymerase involved in untargeted mutagenesis. Copies undamaged DNA at stalled replication forks, which arise in vivo from mismatched or misaligned primer ends. These misaligned primers can be extended by PolIV. Exhibits no 3'-5' exonuclease (proofreading) activity. May be involved in translesional synthesis, in conjunction with the beta clamp from PolIII. The chain is DNA polymerase IV from Staphylococcus aureus (strain JH1).